A 195-amino-acid chain; its full sequence is Pyridoxal 5'-phosphate synthase subunit PdxT (195 aa).

46–48 (GES) contacts L-glutamine. Residue Cys-78 is the Nucleophile of the active site. L-glutamine is bound by residues Arg-107 and 136 to 137 (IR). Residues His-173 and Glu-175 each act as charge relay system in the active site.

This sequence belongs to the glutaminase PdxT/SNO family. In the presence of PdxS, forms a dodecamer of heterodimers. Only shows activity in the heterodimer.

It carries out the reaction aldehydo-D-ribose 5-phosphate + D-glyceraldehyde 3-phosphate + L-glutamine = pyridoxal 5'-phosphate + L-glutamate + phosphate + 3 H2O + H(+). It catalyses the reaction L-glutamine + H2O = L-glutamate + NH4(+). Its pathway is cofactor biosynthesis; pyridoxal 5'-phosphate biosynthesis. Functionally, catalyzes the hydrolysis of glutamine to glutamate and ammonia as part of the biosynthesis of pyridoxal 5'-phosphate. The resulting ammonia molecule is channeled to the active site of PdxS. In Dehalococcoides mccartyi (strain ATCC BAA-2266 / KCTC 15142 / 195) (Dehalococcoides ethenogenes (strain 195)), this protein is Pyridoxal 5'-phosphate synthase subunit PdxT.